The chain runs to 790 residues: Pentatricopeptide repeat-containing protein At1g25360 (790 aa).

16 PPR repeats span residues Arg-48–Ala-82, Thr-84–Cys-109, Asp-112–Pro-146, Asp-147–Tyr-182, Ile-183–Lys-217, Asp-218–Asn-248, Lys-250–Leu-284, Asp-285–Arg-315, Ser-319–Lys-349, Asp-350–Ser-384, Trp-385–Pro-415, Cys-416–Ser-450, Ser-451–Leu-481, Asp-482–Pro-516, Asp-517–Pro-551, and Gly-553–Lys-583. Positions Ile-588 to Glu-663 are type E motif. Residues Thr-664–Arg-694 are type E(+) motif. Residues Arg-695 to Trp-790 are type DYW motif.

Belongs to the PPR family. PCMP-H subfamily.

This Arabidopsis thaliana (Mouse-ear cress) protein is Pentatricopeptide repeat-containing protein At1g25360 (PCMP-H74).